We begin with the raw amino-acid sequence, 882 residues long: Putative HTH-type transcriptional regulator Rv0890c (882 aa).

The region spanning 814–879 (PARGWGSLTP…QLVDEAARRG (66 aa)) is the HTH luxR-type domain. The segment at residues 838 to 857 (NKDIAKRLFVSPRTVQTHLT) is a DNA-binding region (H-T-H motif).

This is Putative HTH-type transcriptional regulator Rv0890c from Mycobacterium tuberculosis (strain ATCC 25618 / H37Rv).